The chain runs to 340 residues: Hydroxyurea phosphotransferase (340 aa).

Catalysis depends on Asp-240, which acts as the Proton acceptor.

The protein belongs to the aminoglycoside phosphotransferase family.

Functionally, potential phosphotransferase that inactivates hydroxyurea by phosphorylation of the hydroxy group in the hydroxylamine moiety. This Kitasatospora aureofaciens (Streptomyces aureofaciens) protein is Hydroxyurea phosphotransferase (hur).